Here is a 363-residue protein sequence, read N- to C-terminus: MPHAFPFLTPDQKKELSDIALKIVAKGKGILAADESTGSVAKRFQSINTENTEENRRLYRQLLFTADDRAGPCIGGVIFFHETLYQKTDAGKTFPEHVKSRGWVVGIKVDKGVVPLAGTNGETTTQGLDGLYERCAQYKKDGCDFAKWRCVLKITSTTPSRLAIMENCNVLARYASICQMHGIVPIVEPEILPDGDHDLKRTQYVTEKVLAAMYKALSDHHVYLEGTLLKPNMVTAGHSCSHKYTHQEIAMATVTALRRTVPPAVPGVTFLSGGQSEEEASINLNVMNQCPLHRPWALTFSYGRALQASALKAWGGKPGNGKAAQEEFIKRALANSLACQGKYVASGDSAAAGDSLFVANHAY.

R43 lines the beta-D-fructose 1,6-bisphosphate pocket. E188 serves as the catalytic Proton acceptor. Residue K230 is the Schiff-base intermediate with dihydroxyacetone-P of the active site. Beta-D-fructose 1,6-bisphosphate-binding positions include 272 to 274 (SGG), S301, and R304.

It belongs to the class I fructose-bisphosphate aldolase family. In terms of assembly, tetramer.

It catalyses the reaction beta-D-fructose 1,6-bisphosphate = D-glyceraldehyde 3-phosphate + dihydroxyacetone phosphate. It participates in carbohydrate degradation; glycolysis; D-glyceraldehyde 3-phosphate and glycerone phosphate from D-glucose: step 4/4. Functionally, plays a key role in glycolysis and gluconeogenesis. This chain is Fructose-bisphosphate aldolase A, found in Salmo salar (Atlantic salmon).